Consider the following 324-residue polypeptide: MSSEQEFEKPVIELRQKIADLRAFAMERDMDLSTEIKKMEARLSELEEEVYANLQPWERVQIARDHERPTTLDYVDVLFEDFLEMHGDRLFGDDKAIVGGIATYKGKPVTVIGHQRGKDTKENIVRYFGSPHPEGYRKALRLMKQAEKFKRPIICFIDTKGAYPGKAAEERGQSEAIARNLLEMAGLKVPTISIVIGEGGSGGALALGVADEIHMLENATYSVISPEGAAAILWKDAGKAKKAAESMRITAPDLYELGIIDSIIPEPRGGAQRNLHQQADEIDRLLEKALTRLAEKPVDVLLDERYEKFMKIGHIPEEAATTGQ.

The CoA carboxyltransferase C-terminal domain maps to 42–296 (RLSELEEEVY…EKALTRLAEK (255 aa)).

Belongs to the AccA family. Acetyl-CoA carboxylase is a heterohexamer composed of biotin carboxyl carrier protein (AccB), biotin carboxylase (AccC) and two subunits each of ACCase subunit alpha (AccA) and ACCase subunit beta (AccD).

The protein resides in the cytoplasm. The enzyme catalyses N(6)-carboxybiotinyl-L-lysyl-[protein] + acetyl-CoA = N(6)-biotinyl-L-lysyl-[protein] + malonyl-CoA. The protein operates within lipid metabolism; malonyl-CoA biosynthesis; malonyl-CoA from acetyl-CoA: step 1/1. Its function is as follows. Component of the acetyl coenzyme A carboxylase (ACC) complex. First, biotin carboxylase catalyzes the carboxylation of biotin on its carrier protein (BCCP) and then the CO(2) group is transferred by the carboxyltransferase to acetyl-CoA to form malonyl-CoA. The polypeptide is Acetyl-coenzyme A carboxylase carboxyl transferase subunit alpha (Shouchella clausii (strain KSM-K16) (Alkalihalobacillus clausii)).